The chain runs to 497 residues: Glycerol kinase (497 aa).

Position 12 (Thr12) interacts with ADP. Residues Thr12, Thr13, and Ser14 each contribute to the ATP site. Thr12 provides a ligand contact to sn-glycerol 3-phosphate. Arg16 contributes to the ADP binding site. Residues Arg82, Glu83, Tyr134, and Asp243 each contribute to the sn-glycerol 3-phosphate site. Residues Arg82, Glu83, Tyr134, Asp243, and Gln244 each contribute to the glycerol site. ADP is bound by residues Thr265 and Gly308. Positions 265, 308, 312, and 411 each coordinate ATP. Position 411 (Gly411) interacts with ADP.

This sequence belongs to the FGGY kinase family.

It carries out the reaction glycerol + ATP = sn-glycerol 3-phosphate + ADP + H(+). Its pathway is polyol metabolism; glycerol degradation via glycerol kinase pathway; sn-glycerol 3-phosphate from glycerol: step 1/1. Inhibited by fructose 1,6-bisphosphate (FBP). Its function is as follows. Key enzyme in the regulation of glycerol uptake and metabolism. Catalyzes the phosphorylation of glycerol to yield sn-glycerol 3-phosphate. The sequence is that of Glycerol kinase from Rhizobium meliloti (strain 1021) (Ensifer meliloti).